Reading from the N-terminus, the 252-residue chain is Imidazole glycerol phosphate synthase subunit HisF (252 aa).

Catalysis depends on residues aspartate 11 and aspartate 130.

It belongs to the HisA/HisF family. Heterodimer of HisH and HisF.

It localises to the cytoplasm. It catalyses the reaction 5-[(5-phospho-1-deoxy-D-ribulos-1-ylimino)methylamino]-1-(5-phospho-beta-D-ribosyl)imidazole-4-carboxamide + L-glutamine = D-erythro-1-(imidazol-4-yl)glycerol 3-phosphate + 5-amino-1-(5-phospho-beta-D-ribosyl)imidazole-4-carboxamide + L-glutamate + H(+). It participates in amino-acid biosynthesis; L-histidine biosynthesis; L-histidine from 5-phospho-alpha-D-ribose 1-diphosphate: step 5/9. In terms of biological role, IGPS catalyzes the conversion of PRFAR and glutamine to IGP, AICAR and glutamate. The HisF subunit catalyzes the cyclization activity that produces IGP and AICAR from PRFAR using the ammonia provided by the HisH subunit. This Geobacillus thermodenitrificans (strain NG80-2) protein is Imidazole glycerol phosphate synthase subunit HisF.